A 410-amino-acid chain; its full sequence is Riboflavin biosynthesis protein RibBA (410 aa).

The DHBP synthase stretch occupies residues 1 to 205; that stretch reads MENKRIDTIE…IKDLVAFQMR (205 aa). D-ribulose 5-phosphate is bound by residues 30–31, aspartate 35, 144–148, and glutamate 168; these read RE and RVGHT. Glutamate 31 contacts Mg(2+). Histidine 147 contributes to the Mg(2+) binding site. The segment at 206–410 is GTP cyclohydrolase II; that stretch reads RSKLVQRAVE…ISCSCGSGNH (205 aa). 256–260 provides a ligand contact to GTP; the sequence is RVHSQ. Zn(2+) is bound by residues cysteine 261, cysteine 272, and cysteine 274. Residues glutamine 277, 299-301, and threonine 321 each bind GTP; that span reads EGR. Aspartate 333 acts as the Proton acceptor; for GTP cyclohydrolase activity in catalysis. The Nucleophile; for GTP cyclohydrolase activity role is filled by arginine 335. Threonine 356 and lysine 361 together coordinate GTP.

This sequence in the N-terminal section; belongs to the DHBP synthase family. It in the C-terminal section; belongs to the GTP cyclohydrolase II family. Mg(2+) is required as a cofactor. Mn(2+) serves as cofactor. The cofactor is Zn(2+).

It catalyses the reaction D-ribulose 5-phosphate = (2S)-2-hydroxy-3-oxobutyl phosphate + formate + H(+). The catalysed reaction is GTP + 4 H2O = 2,5-diamino-6-hydroxy-4-(5-phosphoribosylamino)-pyrimidine + formate + 2 phosphate + 3 H(+). It participates in cofactor biosynthesis; riboflavin biosynthesis; 2-hydroxy-3-oxobutyl phosphate from D-ribulose 5-phosphate: step 1/1. It functions in the pathway cofactor biosynthesis; riboflavin biosynthesis; 5-amino-6-(D-ribitylamino)uracil from GTP: step 1/4. In terms of biological role, catalyzes the conversion of D-ribulose 5-phosphate to formate and 3,4-dihydroxy-2-butanone 4-phosphate. Its function is as follows. Catalyzes the conversion of GTP to 2,5-diamino-6-ribosylamino-4(3H)-pyrimidinone 5'-phosphate (DARP), formate and pyrophosphate. This Chlorobium phaeovibrioides (strain DSM 265 / 1930) (Prosthecochloris vibrioformis (strain DSM 265)) protein is Riboflavin biosynthesis protein RibBA.